A 72-amino-acid polypeptide reads, in one-letter code: Translation initiation factor IF-1 (72 aa).

The S1-like domain maps to 1 to 72 (MAGNDVIEIE…TKGRITYRHK (72 aa)).

It belongs to the IF-1 family. As to quaternary structure, component of the 30S ribosomal translation pre-initiation complex which assembles on the 30S ribosome in the order IF-2 and IF-3, IF-1 and N-formylmethionyl-tRNA(fMet); mRNA recruitment can occur at any time during PIC assembly.

Its subcellular location is the cytoplasm. One of the essential components for the initiation of protein synthesis. Stabilizes the binding of IF-2 and IF-3 on the 30S subunit to which N-formylmethionyl-tRNA(fMet) subsequently binds. Helps modulate mRNA selection, yielding the 30S pre-initiation complex (PIC). Upon addition of the 50S ribosomal subunit IF-1, IF-2 and IF-3 are released leaving the mature 70S translation initiation complex. The chain is Translation initiation factor IF-1 from Oenococcus oeni (strain ATCC BAA-331 / PSU-1).